We begin with the raw amino-acid sequence, 707 residues long: ATP-dependent RNA helicase DHX33 (707 aa).

The tract at residues 1–64 is disordered; that stretch reads MPEEAGFPPA…LAQPSASPYP (64 aa). The interval 1-80 is required for nucleolar location; that stretch reads MPEEAGFPPA…RRSLPIFQAR (80 aa). The segment covering 39 to 49 has biased composition (gly residues); that stretch reads GSGGRGGGGGR. The span at 50–64 shows a compositional bias: low complexity; that stretch reads RQQPPLAQPSASPYP. The Helicase ATP-binding domain occupies 84–252; sequence LAQLRNLDNA…FNGAPVLYLE (169 aa). 97 to 104 provides a ligand contact to ATP; the sequence is GETGSGKT. Positions 194 to 197 match the DEAH box motif; the sequence is DEAH. The region spanning 277 to 450 is the Helicase C-terminal domain; sequence SVFQIHQEAP…SVMLQLLAMK (174 aa). Positions 471 to 562 are HA2; required for interaction with EIF3G and RPL26; the sequence is AIAQLDLLGA…ISSEGDHMTL (92 aa). A Critical for rDNA-binding motif is present at residues 547–558; it reads GVRKKFISSEGD.

This sequence belongs to the DEAD box helicase family. DEAH subfamily. As to quaternary structure, interacts with UBTF. Interacts with DDX3X, EIF3G and EIF3H; the interaction is independent of RNA. Interacts (via HA2 region and Helicase C-terminal domain) with the components of the large ribosomal subunit RPL3, RPL7, RPL26 and RPL27. Interacts (via DEAH box) with NLRP3 (via NACHT domain). Binds to mRNA. Binds to double-stranded RNA (via the helicase C-terminal domain). Interacts (via the helicase C-terminal domain) with MAVS. Ubiquitinated, leading to its degradation by the proteasome. Deubiquitinated by USP36.

The protein localises to the nucleus. It localises to the nucleolus. The protein resides in the nucleoplasm. It is found in the cytoplasm. Its subcellular location is the inflammasome. It catalyses the reaction ATP + H2O = ADP + phosphate + H(+). In terms of biological role, implicated in nucleolar organization, ribosome biogenesis, protein synthesis and cytoplasmic dsRNA sensing. Stimulates RNA polymerase I transcription of the 47S precursor rRNA. Associates with ribosomal DNA (rDNA) loci where it is involved in POLR1A recruitment. In the cytoplasm, promotes elongation-competent 80S ribosome assembly at the late stage of mRNA translation initiation. Senses cytosolic dsRNA mediating NLRP3 inflammasome formation in macrophages and type I interferon production in myeloid dendritic cells. Required for NLRP3 activation induced by viral dsRNA and bacterial RNA. In dendritic cells, required for induction of type I interferon production induced by cytoplasmic dsRNA via the activation of MAPK and NF-kappa-B signaling pathways. The sequence is that of ATP-dependent RNA helicase DHX33 from Homo sapiens (Human).